We begin with the raw amino-acid sequence, 588 residues long: Arginine--tRNA ligase (588 aa).

Residues 124-134 (PNVAKPMHVGH) carry the 'HIGH' region motif.

This sequence belongs to the class-I aminoacyl-tRNA synthetase family. Monomer.

Its subcellular location is the cytoplasm. The catalysed reaction is tRNA(Arg) + L-arginine + ATP = L-arginyl-tRNA(Arg) + AMP + diphosphate. This is Arginine--tRNA ligase from Maricaulis maris (strain MCS10) (Caulobacter maris).